Here is a 726-residue protein sequence, read N- to C-terminus: Long-chain-alcohol oxidase FAO4A (726 aa).

A helical transmembrane segment spans residues Ile103–Phe119. Residue Cys224–Ala239 coordinates FAD. His659 (proton acceptor) is an active-site residue.

The protein belongs to the GMC oxidoreductase family.

The protein resides in the membrane. It catalyses the reaction a long-chain primary fatty alcohol + O2 = a long-chain fatty aldehyde + H2O2. In terms of biological role, long-chain fatty alcohol oxidase involved in the omega-oxidation pathway of lipid degradation. This chain is Long-chain-alcohol oxidase FAO4A (FAO4A), found in Arabidopsis thaliana (Mouse-ear cress).